A 139-amino-acid polypeptide reads, in one-letter code: Protein archease (139 aa).

Ca(2+) is bound by residues Asp12, Asp138, and Ile139.

This sequence belongs to the archease family.

Its function is as follows. Activates the tRNA-splicing ligase complex by facilitating the enzymatic turnover of catalytic subunit RtcB. Acts by promoting the guanylylation of RtcB, a key intermediate step in tRNA ligation. Can also alter the NTP specificity of RtcB such that ATP, dGTP or ITP is used efficiently. The sequence is that of Protein archease from Saccharolobus islandicus (strain M.16.27) (Sulfolobus islandicus).